The primary structure comprises 128 residues: uncharacterized protein (128 aa).

The 69-residue stretch at glycine 6–lysine 74 folds into the S1 motif domain. A disordered region spans residues serine 72–glycine 128. The segment covering aspartate 78 to arginine 120 has biased composition (basic and acidic residues).

The protein belongs to the peptidase U57 family.

This is an uncharacterized protein from Bacillus subtilis (strain 168).